Here is a 577-residue protein sequence, read N- to C-terminus: Anthranilate synthase alpha subunit 1, chloroplastic (577 aa).

The N-terminal 34 residues, 1 to 34, are a transit peptide targeting the chloroplast; sequence MASLVLSLRIAPSTPPLGLGGGRFRGRRGAVACR.

This sequence belongs to the anthranilate synthase component I family. In terms of assembly, heterotetramer consisting of two non-identical subunits: a beta subunit and a large alpha subunit.

Its subcellular location is the plastid. The protein resides in the chloroplast. The catalysed reaction is chorismate + L-glutamine = anthranilate + pyruvate + L-glutamate + H(+). It participates in amino-acid biosynthesis; L-tryptophan biosynthesis; L-tryptophan from chorismate: step 1/5. Feedback inhibition by tryptophan. In terms of biological role, part of a heterotetrameric complex that catalyzes the two-step biosynthesis of anthranilate, an intermediate in the biosynthesis of L-tryptophan. In the first step, the glutamine-binding beta subunit of anthranilate synthase (AS) provides the glutamine amidotransferase activity which generates ammonia as a substrate that, along with chorismate, is used in the second step, catalyzed by the large alpha subunit of AS to produce anthranilate. The sequence is that of Anthranilate synthase alpha subunit 1, chloroplastic (ASA1) from Oryza sativa subsp. indica (Rice).